A 258-amino-acid chain; its full sequence is Imidazole glycerol phosphate synthase subunit HisF (258 aa).

Active-site residues include aspartate 11 and aspartate 130.

It belongs to the HisA/HisF family. Heterodimer of HisH and HisF.

The protein localises to the cytoplasm. The catalysed reaction is 5-[(5-phospho-1-deoxy-D-ribulos-1-ylimino)methylamino]-1-(5-phospho-beta-D-ribosyl)imidazole-4-carboxamide + L-glutamine = D-erythro-1-(imidazol-4-yl)glycerol 3-phosphate + 5-amino-1-(5-phospho-beta-D-ribosyl)imidazole-4-carboxamide + L-glutamate + H(+). It participates in amino-acid biosynthesis; L-histidine biosynthesis; L-histidine from 5-phospho-alpha-D-ribose 1-diphosphate: step 5/9. Its function is as follows. IGPS catalyzes the conversion of PRFAR and glutamine to IGP, AICAR and glutamate. The HisF subunit catalyzes the cyclization activity that produces IGP and AICAR from PRFAR using the ammonia provided by the HisH subunit. The sequence is that of Imidazole glycerol phosphate synthase subunit HisF from Xanthomonas campestris pv. campestris (strain 8004).